The primary structure comprises 613 residues: Leucine-rich repeat and immunoglobulin-like domain-containing nogo receptor-interacting protein 1 (613 aa).

Residues 1–34 (MLAGEASMRSPILACWQPILLLMLGSILSGSATG) form the signal peptide. Cystine bridges form between Cys35/Cys41 and Cys39/Cys50. In terms of domain architecture, LRRNT spans 35-64 (CPPRCECSAQERAVLCHRKRFMVVPEGIPT). Residues 35–554 (CPPRCECSAQ…FDIKTLIIAT (520 aa)) lie on the Extracellular side of the membrane. LRR repeat units lie at residues 65–86 (ETRQLDLGKNRIKTLNQDEFAN), 89–110 (HLEELELNENIISAIEPGAFNN), 113–134 (NLRTLGLRSNRLKLIPLGVFTG), 137–158 (NLTKLDISENKIVILLDYMFQD), 161–182 (NLKSLEVGDNDLVYISHRAFSG), 185–206 (SLEQLTLEKCNLTSIPTEALSH), 209–230 (GLIVLRLRHLNINAIRDYSFKR), 257–278 (NLTSLSITHCNLTSIPYVSVRH), 281–302 (YLRFLNLSYNPIVTIEGSMLHD), 305–326 (RLQEIQLVGGQLTTVEPFAFRG), and 329–350 (YLRILNVSGNLLTTLEESAFHS). An N-linked (GlcNAc...) asparagine glycan is attached at Asn137. N-linked (GlcNAc...) asparagine glycosylation occurs at Asn195. Residues Asn257, Asn267, and Asn286 are each glycosylated (N-linked (GlcNAc...) asparagine). Residue Asn334 is glycosylated (N-linked (GlcNAc...) asparagine). The 55-residue stretch at 362–416 (NPLACDCRLLWVFRRRWRLNFNKQQPTCSTPEFVQGKEFKDFPDVLLPNYFTCRR) folds into the LRRCT domain. 3 disulfides stabilise this stretch: Cys366-Cys389, Cys368-Cys414, and Cys439-Cys490. Residues 404–508 (PDVLLPNYFT…DTMLAHLHVR (105 aa)) enclose the Ig-like C2-type domain. N-linked (GlcNAc...) asparagine glycosylation is found at Asn485, Asn498, Asn519, Asn530, and Asn535. Residues 555 to 575 (TMGFISFLGVVLFCLVLLFLW) form a helical membrane-spanning segment. Residues 576-613 (SRGKGNTKHNIEIEYVPRKSDAGISSADAPRKFNMKMI) lie on the Cytoplasmic side of the membrane.

Homotetramer. Forms ternary complex with RTN4R/NGFR and RTN4R/TNFRSF19. Post-translationally, N-glycosylated. Contains predominantly high-mannose glycans.

The protein resides in the cell membrane. Functionally, functional component of the Nogo receptor signaling complex (RTN4R/NGFR) in RhoA activation responsible for some inhibition of axonal regeneration by myelin-associated factors. Is also an important negative regulator of oligodentrocyte differentiation and axonal myelination. In Gallus gallus (Chicken), this protein is Leucine-rich repeat and immunoglobulin-like domain-containing nogo receptor-interacting protein 1 (LINGO1).